The primary structure comprises 236 residues: Ubiquinone biosynthesis O-methyltransferase (236 aa).

Arg-39, Gly-59, Asp-80, and Met-124 together coordinate S-adenosyl-L-methionine.

Belongs to the methyltransferase superfamily. UbiG/COQ3 family.

It carries out the reaction a 3-demethylubiquinol + S-adenosyl-L-methionine = a ubiquinol + S-adenosyl-L-homocysteine + H(+). It catalyses the reaction a 3-(all-trans-polyprenyl)benzene-1,2-diol + S-adenosyl-L-methionine = a 2-methoxy-6-(all-trans-polyprenyl)phenol + S-adenosyl-L-homocysteine + H(+). It functions in the pathway cofactor biosynthesis; ubiquinone biosynthesis. O-methyltransferase that catalyzes the 2 O-methylation steps in the ubiquinone biosynthetic pathway. The protein is Ubiquinone biosynthesis O-methyltransferase of Shewanella baltica (strain OS223).